Here is a 301-residue protein sequence, read N- to C-terminus: Acetylglutamate kinase (301 aa).

Substrate is bound by residues 76-77, Arg98, and Asn192; that span reads GG.

It belongs to the acetylglutamate kinase family. ArgB subfamily.

Its subcellular location is the cytoplasm. It catalyses the reaction N-acetyl-L-glutamate + ATP = N-acetyl-L-glutamyl 5-phosphate + ADP. The protein operates within amino-acid biosynthesis; L-arginine biosynthesis; N(2)-acetyl-L-ornithine from L-glutamate: step 2/4. In terms of biological role, catalyzes the ATP-dependent phosphorylation of N-acetyl-L-glutamate. The chain is Acetylglutamate kinase from Chlorobaculum parvum (strain DSM 263 / NCIMB 8327) (Chlorobium vibrioforme subsp. thiosulfatophilum).